A 184-amino-acid chain; its full sequence is Elongation factor P (184 aa).

This sequence belongs to the elongation factor P family.

Its subcellular location is the cytoplasm. It participates in protein biosynthesis; polypeptide chain elongation. In terms of biological role, involved in peptide bond synthesis. Stimulates efficient translation and peptide-bond synthesis on native or reconstituted 70S ribosomes in vitro. Probably functions indirectly by altering the affinity of the ribosome for aminoacyl-tRNA, thus increasing their reactivity as acceptors for peptidyl transferase. In Verminephrobacter eiseniae (strain EF01-2), this protein is Elongation factor P.